We begin with the raw amino-acid sequence, 327 residues long: uncharacterized protein (327 aa).

Residues 1–17 (MASMAAAIAASRSAVMS) are compositionally biased toward low complexity. Residues 1-22 (MASMAAAIAASRSAVMSGNRPL) are disordered. Ala-2 carries the N-acetylalanine modification. The residue at position 37 (Ser-37) is a Phosphoserine. The disordered stretch occupies residues 76–113 (GPRAPAPRDPGDSEELTRFPGLRGPTGQKVVRFGDEDL). Residue Ser-129 is modified to Phosphoserine. Positions 134 to 148 (SISALSIQEPSNGTA) are enriched in polar residues. Residues 134-299 (SISALSIQEP…PDVRQDDGED (166 aa)) form a disordered region. A compositionally biased stretch (low complexity) spans 162–176 (SQALKSSQGSRSSSL). Ser-175 is modified (phosphoserine). Basic and acidic residues-rich tracts occupy residues 182 to 202 (TRKE…RGEG) and 233 to 252 (PAPK…RQEQ). Position 289 is a phosphoserine (Ser-289).

Its subcellular location is the cytoplasm. This is an uncharacterized protein from Homo sapiens (Human).